A 180-amino-acid polypeptide reads, in one-letter code: UPF0134 protein MPN_368 (180 aa).

Belongs to the UPF0134 family.

The protein is UPF0134 protein MPN_368 of Mycoplasma pneumoniae (strain ATCC 29342 / M129 / Subtype 1) (Mycoplasmoides pneumoniae).